Consider the following 677-residue polypeptide: Zinc finger CCCH domain-containing protein 23 (677 aa).

The segment at 66–117 (PPQAASSSPTVPAAHSPFLLSRQNSGRCPAPSPSSWAQAQPFSRSNSMGNGG) is disordered. Residues 69–82 (AASSSPTVPAAHSP) show a composition bias toward low complexity. Residues 98–113 (PSSWAQAQPFSRSNSM) show a composition bias toward polar residues. Residues 228–255 (GFGWKPCLYYARGFCKNGSTCRFVHGGL) form a C3H1-type zinc finger. In terms of domain architecture, RRM spans 359–435 (RQIYLTFPAD…RVLVKPYKEK (77 aa)). Positions 480–513 (ANELMLRRKLEEQQQAAELQQAIDLHSRRLIGLQ) form a coiled coil. The span at 535–562 (TPITNAFTSGQPGATTIVESPPSSTGQL) shows a compositional bias: polar residues. The tract at residues 535–607 (TPITNAFTSG…EHNLPDSPFA (73 aa)) is disordered. Over residues 589–601 (RNADSDQSGEHNL) the composition is skewed to basic and acidic residues.

This is Zinc finger CCCH domain-containing protein 23 from Oryza sativa subsp. japonica (Rice).